The primary structure comprises 740 residues: Ribosomal protein S6 kinase alpha-6 (740 aa).

A Protein kinase 1 domain is found at 67 to 326; the sequence is FELLKVLGQG…VEEIKRHTFF (260 aa). ATP-binding positions include 73-81 and K99; that span reads LGQGSFGKV. D192 serves as the catalytic Proton acceptor. The region spanning 327 to 396 is the AGC-kinase C-terminal domain; that stretch reads STIDWNKLYR…VAPVSLEESK (70 aa). The region spanning 420-677 is the Protein kinase 2 domain; that stretch reads YELKEDIGVG…AEQVLKHSWI (258 aa). Residues 426 to 434 and K449 each bind ATP; that span reads IGVGSYSIC. The Proton acceptor role is filled by D537.

It belongs to the protein kinase superfamily. AGC Ser/Thr protein kinase family. S6 kinase subfamily. Forms a complex with either ERK1 or ERK2 in quiescent cells. Transiently dissociates following mitogenic stimulation. Mg(2+) is required as a cofactor.

The catalysed reaction is L-seryl-[protein] + ATP = O-phospho-L-seryl-[protein] + ADP + H(+). It carries out the reaction L-threonyl-[protein] + ATP = O-phospho-L-threonyl-[protein] + ADP + H(+). Activated by multiple phosphorylations on threonine and serine residues. In terms of biological role, serine/threonine kinase that may play a role in mediating the growth-factor and stress induced activation of the transcription factor CREB. This Danio rerio (Zebrafish) protein is Ribosomal protein S6 kinase alpha-6 (rps6ka6).